The chain runs to 306 residues: Metal ABC transporter substrate-binding lipoprotein SloC (306 aa).

The signal sequence occupies residues 1-19 (MKKLSLLLLVCLSLLGLFA). Cysteine 20 carries the N-palmitoyl cysteine lipid modification. Residue cysteine 20 is the site of S-diacylglycerol cysteine attachment. The a divalent metal cation site is built by histidine 64, histidine 136, glutamate 202, and aspartate 277.

The protein belongs to the bacterial solute-binding protein 9 family. Lipoprotein receptor antigen (Lrai) subfamily.

The protein resides in the cell membrane. Part of the ATP-binding cassette (ABC) transport system SloABC involved in metal import. Binds a metal with high affinity and specificity and delivers it to the membrane permease for translocation into the cytoplasm. May act as an adhesin which is involved on adherence to extracellular matrix. It is an important factor in pathogenesis and infection. May contribute to the formation and accumulation of dental plaque. This is Metal ABC transporter substrate-binding lipoprotein SloC (sloC) from Streptococcus mutans serotype c (strain ATCC 700610 / UA159).